The chain runs to 231 residues: NADH-ubiquinone oxidoreductase chain 4 (231 aa).

The next 7 membrane-spanning stretches (helical) occupy residues 1-21 (PIAG…YGII), 34-54 (LFLP…LTCL), 63-85 (IAYS…TPWG), 89-111 (AMAL…NTTY), 128-148 (ILPM…AIPP), 156-176 (LLIM…LGLS), and 211-231 (LLIA…ELVI).

The protein belongs to the complex I subunit 4 family.

The protein localises to the mitochondrion membrane. It catalyses the reaction a ubiquinone + NADH + 5 H(+)(in) = a ubiquinol + NAD(+) + 4 H(+)(out). In terms of biological role, core subunit of the mitochondrial membrane respiratory chain NADH dehydrogenase (Complex I) that is believed to belong to the minimal assembly required for catalysis. Complex I functions in the transfer of electrons from NADH to the respiratory chain. The immediate electron acceptor for the enzyme is believed to be ubiquinone. This Crotalus adamanteus (Eastern diamondback rattlesnake) protein is NADH-ubiquinone oxidoreductase chain 4 (MT-ND4).